Consider the following 131-residue polypeptide: Small ribosomal subunit protein eS6 (131 aa).

It belongs to the eukaryotic ribosomal protein eS6 family.

The sequence is that of Small ribosomal subunit protein eS6 from Halobacterium salinarum (strain ATCC 29341 / DSM 671 / R1).